Here is a 425-residue protein sequence, read N- to C-terminus: Transmembrane protein 184A (425 aa).

The next 7 membrane-spanning stretches (helical) occupy residues 51–71 (LFLT…TALL), 96–116 (LLFI…LLGG), 133–153 (FVIY…SAIM), 189–209 (TLQF…LQAF), 226–246 (VTLV…LFYF), 261–281 (FLTI…LAIL), and 303–323 (LAAG…SLAL). A disordered region spans residues 375-425 (QYTQQSTHEAPGPGQGGHPSPSTHPGPASGSGGGKKSRNIEKRMLIPSEDL). Over residues 392–402 (HPSPSTHPGPA) the composition is skewed to low complexity.

It belongs to the TMEM184 family. Expressed in vascular cells (at protein level).

It localises to the cell membrane. The protein localises to the cytoplasm. It is found in the perinuclear region. Its subcellular location is the early endosome membrane. The protein resides in the endosome. It localises to the cytoplasmic vesicle. The protein localises to the secretory vesicle membrane. It is found in the cytoplasmic vesicle membrane. Its function is as follows. Acts as a heparin receptor in vascular cells. May be involved in vesicle transport in exocrine cells and Sertoli cells. The sequence is that of Transmembrane protein 184A (Tmem184a) from Rattus norvegicus (Rat).